A 139-amino-acid polypeptide reads, in one-letter code: ATP synthase epsilon chain (139 aa).

Residues 89–110 (EARAEQARAEAEARRREAQSEH) are disordered.

It belongs to the ATPase epsilon chain family. In terms of assembly, F-type ATPases have 2 components, CF(1) - the catalytic core - and CF(0) - the membrane proton channel. CF(1) has five subunits: alpha(3), beta(3), gamma(1), delta(1), epsilon(1). CF(0) has three main subunits: a, b and c.

It localises to the cell membrane. Produces ATP from ADP in the presence of a proton gradient across the membrane. The chain is ATP synthase epsilon chain from Chloroflexus aggregans (strain MD-66 / DSM 9485).